We begin with the raw amino-acid sequence, 522 residues long: Leucine-rich repeat transmembrane neuronal protein 1 (522 aa).

The signal sequence occupies residues Met-1–Ala-34. The LRRNT domain maps to Ala-35–Asn-63. The Extracellular portion of the chain corresponds to Ala-35–Lys-427. 2 N-linked (GlcNAc...) asparagine glycosylation sites follow: Asn-56 and Asn-63. 10 LRR repeats span residues Leu-64 to Gly-87, Met-89 to Lys-111, Leu-112 to Pro-135, Met-136 to Gly-159, Arg-161 to Asp-183, Cys-184 to Gly-207, Phe-209 to Arg-231, Ile-233 to Val-255, Trp-256 to Thr-278, and Pro-280 to Ser-302. The N-linked (GlcNAc...) asparagine glycan is linked to Asn-130. Positions Asn-314–Asp-365 constitute an LRRCT domain. The N-linked (GlcNAc...) asparagine glycan is linked to Asn-381. The chain crosses the membrane as a helical span at residues Val-428–Val-448. Over Ser-449–Val-522 the chain is Cytoplasmic.

The protein belongs to the LRRTM family. In terms of tissue distribution, expressed predominantly in the nervous system by postmitotic neurons, but also in some non-neuronal tissues. In adult brain expression is most prominent in the forebraain, particularly in the thalamus and in the cortical areas including hippocampus, piriform and posterior cingulate.

It localises to the cell membrane. The protein resides in the postsynaptic cell membrane. In terms of biological role, exhibits strong synaptogenic activity, restricted to excitatory presynaptic differentiation, acting at both pre- and postsynaptic level. In Mus musculus (Mouse), this protein is Leucine-rich repeat transmembrane neuronal protein 1 (Lrrtm1).